A 376-amino-acid polypeptide reads, in one-letter code: Homoserine dehydrogenase (376 aa).

The NADP(+) site is built by Asn-17 and Ile-18. An NAD(+)-binding site is contributed by Ile-18. Ile-18, Lys-67, Thr-99, and Lys-123 together coordinate NADPH. Positions 99 and 123 each coordinate NADP(+). Thr-99 contributes to the NAD(+) binding site. Na(+) contacts are provided by Glu-150, Val-153, Ala-155, and Leu-157. At Ser-201 the chain carries Phosphoserine. Gly-213 and Glu-216 together coordinate NADP(+). L-homoserine is bound by residues Glu-216 and Asp-227. Lys-231 acts as the Proton donor in catalysis. Gly-349 provides a ligand contact to NADP(+). Gly-349 is an NAD(+) binding site. Gly-349 contacts NADPH.

Belongs to the homoserine dehydrogenase family. It depends on a metal cation as a cofactor.

It carries out the reaction L-homoserine + NADP(+) = L-aspartate 4-semialdehyde + NADPH + H(+). The enzyme catalyses L-homoserine + NAD(+) = L-aspartate 4-semialdehyde + NADH + H(+). Its pathway is amino-acid biosynthesis; L-methionine biosynthesis via de novo pathway; L-homoserine from L-aspartate: step 3/3. The protein operates within amino-acid biosynthesis; L-threonine biosynthesis; L-threonine from L-aspartate: step 3/5. Its function is as follows. Catalyzes the conversion of L-aspartate-beta-semialdehyde (L-Asa) to L-homoserine (L-Hse), the third step in the biosynthesis of amino acids that derive from aspartate (the aspartate family of amino acids), including methioinine and threonine, the latter of which is a precursor to isoleucine; production of homoserine leads to a branch-point in the pathway as it can either be O-phosphorylated for processing to threonine, or O-acylated for processing to methionine. This Schizosaccharomyces pombe (strain 972 / ATCC 24843) (Fission yeast) protein is Homoserine dehydrogenase.